The chain runs to 93 residues: MTRSLKKGPFVADHLLNKIENLNAKEEKKVIITWSRASTIVPAMIGHTIAVHNGREHLPVFITELMIRHKLGEFASTRTFRSHLKKSDKKSRR.

The protein belongs to the universal ribosomal protein uS19 family.

The protein localises to the plastid. It is found in the chloroplast. Its function is as follows. Protein S19 forms a complex with S13 that binds strongly to the 16S ribosomal RNA. The sequence is that of Small ribosomal subunit protein uS19c from Zygnema circumcarinatum (Green alga).